Here is a 347-residue protein sequence, read N- to C-terminus: DNA-directed RNA polymerase subunit alpha (347 aa).

Residues 1-243 are alpha N-terminal domain (alpha-NTD); it reads MLIKQGDRLI…DQISVFINFD (243 aa). An alpha C-terminal domain (alpha-CTD) region spans residues 260-347; the sequence is FNEHLFKSID…EWKRKQQHEA (88 aa).

This sequence belongs to the RNA polymerase alpha chain family. In terms of assembly, homodimer. The RNAP catalytic core consists of 2 alpha, 1 beta, 1 beta' and 1 omega subunit. When a sigma factor is associated with the core the holoenzyme is formed, which can initiate transcription.

The catalysed reaction is RNA(n) + a ribonucleoside 5'-triphosphate = RNA(n+1) + diphosphate. In terms of biological role, DNA-dependent RNA polymerase catalyzes the transcription of DNA into RNA using the four ribonucleoside triphosphates as substrates. In Nitratidesulfovibrio vulgaris (strain ATCC 29579 / DSM 644 / CCUG 34227 / NCIMB 8303 / VKM B-1760 / Hildenborough) (Desulfovibrio vulgaris), this protein is DNA-directed RNA polymerase subunit alpha.